We begin with the raw amino-acid sequence, 181 residues long: Crossover junction endodeoxyribonuclease RuvC (181 aa).

Catalysis depends on residues Asp-7, Glu-67, and Asp-139. The Mg(2+) site is built by Asp-7, Glu-67, and Asp-139.

Belongs to the RuvC family. Homodimer which binds Holliday junction (HJ) DNA. The HJ becomes 2-fold symmetrical on binding to RuvC with unstacked arms; it has a different conformation from HJ DNA in complex with RuvA. In the full resolvosome a probable DNA-RuvA(4)-RuvB(12)-RuvC(2) complex forms which resolves the HJ. Requires Mg(2+) as cofactor.

It is found in the cytoplasm. It carries out the reaction Endonucleolytic cleavage at a junction such as a reciprocal single-stranded crossover between two homologous DNA duplexes (Holliday junction).. Functionally, the RuvA-RuvB-RuvC complex processes Holliday junction (HJ) DNA during genetic recombination and DNA repair. Endonuclease that resolves HJ intermediates. Cleaves cruciform DNA by making single-stranded nicks across the HJ at symmetrical positions within the homologous arms, yielding a 5'-phosphate and a 3'-hydroxyl group; requires a central core of homology in the junction. The consensus cleavage sequence is 5'-(A/T)TT(C/G)-3'. Cleavage occurs on the 3'-side of the TT dinucleotide at the point of strand exchange. HJ branch migration catalyzed by RuvA-RuvB allows RuvC to scan DNA until it finds its consensus sequence, where it cleaves and resolves the cruciform DNA. The sequence is that of Crossover junction endodeoxyribonuclease RuvC from Ralstonia pickettii (strain 12J).